Here is a 390-residue protein sequence, read N- to C-terminus: Protein phosphatase methylesterase 1 (390 aa).

The tract at residues 19 to 50 (FGLSSLSEDPDESESNSNYFSPTPQPPNELRT) is disordered. Positions 100–332 (PIFICHHGAG…NLIIGQMQGK (233 aa)) constitute an AB hydrolase-1 domain. Active-site residues include Ser186, Asp213, and His346.

Belongs to the AB hydrolase superfamily.

It catalyses the reaction [phosphatase 2A protein]-C-terminal L-leucine methyl ester + H2O = [phosphatase 2A protein]-C-terminal L-leucine + methanol + H(+). In terms of biological role, demethylates proteins that have been reversibly carboxymethylated. Demethylates the phosphatase PP2A catalytic subunit. The protein is Protein phosphatase methylesterase 1 (PPE1) of Debaryomyces hansenii (strain ATCC 36239 / CBS 767 / BCRC 21394 / JCM 1990 / NBRC 0083 / IGC 2968) (Yeast).